The primary structure comprises 268 residues: Single-stranded DNA-binding protein WHY3, chloroplastic (268 aa).

Residues 1-75 (MSQLLSSPPM…KQRFGDSSSS (75 aa)) constitute a chloroplast transit peptide. The tract at residues 93 to 98 (KGKAAL) is required for ssDNA binding. The Nuclear localization signal motif lies at 171 to 185 (KGKGSDEGKVRKVLK).

The protein belongs to the Whirly family. In terms of assembly, homotetramer.

It localises to the plastid. The protein resides in the chloroplast. The protein localises to the nucleus. Functionally, single-stranded DNA-binding protein that functions in both chloroplasts and nucleus. In chloroplasts, maintains plastid genome stability by preventing break-induced and short homology-dependent illegitimate recombinations. In the nucleus, is recruited to a distal element upstream of the kinesin KP1 to mediate the transcriptional repression of KP1. Can bind double-stranded DNA in vivo. This chain is Single-stranded DNA-binding protein WHY3, chloroplastic (WHY3), found in Arabidopsis thaliana (Mouse-ear cress).